Reading from the N-terminus, the 401-residue chain is DNA replication and repair protein RecF (401 aa).

30-37 is a binding site for ATP; the sequence is GYNGIGKT.

Belongs to the RecF family.

It localises to the cytoplasm. In terms of biological role, the RecF protein is involved in DNA metabolism; it is required for DNA replication and normal SOS inducibility. RecF binds preferentially to single-stranded, linear DNA. It also seems to bind ATP. This Arthrobacter sp. (strain FB24) protein is DNA replication and repair protein RecF.